The sequence spans 257 residues: 5'-nucleotidase SurE (257 aa).

4 residues coordinate a divalent metal cation: Asp-8, Asp-9, Ser-40, and Asn-97.

It belongs to the SurE nucleotidase family. A divalent metal cation serves as cofactor.

Its subcellular location is the cytoplasm. It catalyses the reaction a ribonucleoside 5'-phosphate + H2O = a ribonucleoside + phosphate. Functionally, nucleotidase that shows phosphatase activity on nucleoside 5'-monophosphates. The polypeptide is 5'-nucleotidase SurE (Desulforudis audaxviator (strain MP104C)).